The sequence spans 165 residues: Myosin regulatory light chain 2A, cardiac muscle isoform (165 aa).

A2 bears the N,N,N-trimethylalanine mark. 3 EF-hand domains span residues 24-59 (AQIQEFKEAFTIMDQNRDGFIDKADLRDTFAALGRL), 94-128 (DPEETILNAFKVFDPEGKGLKSAYIKEMLMTQEGR), and 129-164 (FSQEEIDQMFAAFPPDVSGNLDYKNLVHVITHGEEK). The Ca(2+) site is built by D37, N39, D41, and D48.

Myosin is a hexamer of 2 heavy chains and 4 light chains. Post-translationally, the N-terminus is blocked. N,N,N-trimethylalanine, found in other myosin light chains would not have been detected in the N-terminal tryptic peptide in PubMed:7319048 because it would remain trimethylated and ninhydrin negative after hydrolysis.

The sequence is that of Myosin regulatory light chain 2A, cardiac muscle isoform from Gallus gallus (Chicken).